A 372-amino-acid polypeptide reads, in one-letter code: Cytochrome b (372 aa).

The next 4 membrane-spanning stretches (helical) occupy residues 25 to 45 (FGSMLLTCSALQIMTGFFLSM), 69 to 90 (WMMQNLHAIGASMFFICVYIHV), 105 to 125 (WLSGTTLLIMLMATAFFGYVL), and 170 to 190 (FFALHFILPFGIISLSSLHIM). Residues His75 and His89 each coordinate heme b. Positions 174 and 188 each coordinate heme b. His193 lines the a ubiquinone pocket. The next 4 membrane-spanning stretches (helical) occupy residues 218–238 (YKDLFMISSMIMIMLLTISFI), 280–300 (LGGALALAMSITILLTVPFTH), 312–332 (FMQLMFWTLVTTFMIITWTAT), and 339–358 (YTMISQVTSSLYFMFFMSNP).

Belongs to the cytochrome b family. In terms of assembly, the cytochrome bc1 complex contains 3 respiratory subunits (MT-CYB, CYC1 and UQCRFS1), 2 core proteins (UQCRC1 and UQCRC2) and probably 6 low-molecular weight proteins. The cofactor is heme b.

The protein localises to the mitochondrion inner membrane. Component of the ubiquinol-cytochrome c reductase complex (complex III or cytochrome b-c1 complex) that is part of the mitochondrial respiratory chain. The b-c1 complex mediates electron transfer from ubiquinol to cytochrome c. Contributes to the generation of a proton gradient across the mitochondrial membrane that is then used for ATP synthesis. The chain is Cytochrome b (MT-CYB) from Acrantophis dumerili (Dumeril's ground boa).